The chain runs to 515 residues: MGQVIGFFQSLPEIINEALNIALICVALLATIKGMVNIWKSGLIQLLFFLTLAGRSCSHSFTIGRFHEFQSVTVNFTQFMSYAPSSCSVNNTHHYFKGPQNTTWGLELTLTNESMINITNSMRVFTNIHHNVTNCVQNISEHEGVLKWLLETMHLSISKPGKHIAPVMCERQKGLLIEYNLTMTKDHHPNYWNQVLYGLAKLLGSSKRLWFGACNKADCQMQSDHQHIKCNYSNCKGYTSFKYLIIQNTTWENHCEYNHLNTIHLLMSPIGQSFITRRLQAFLTWTLSDALGNDLPGGYCLEQWAVVWFGIKCFDNTAMAKCNQNHDSEFCDMLRLFDYNRNAIQSLNDQSQARLNLLTNTINSLVSDNLLMKNKLRELMNVPYCNYTRFWFINDTKNGRHTLPQCWLVSDGSYLNETRFRTQWLSESNSLYTEMLTEEYEKRQGRTPLSLVDLCFWSTLFYISTLFAHLVGFPTHRHLIGEGCPKPHRLTGSGICSCGHYGIPGKPVRWTKMSR.

Residue Gly-2 is the site of N-myristoyl glycine; by host attachment. At 2–17 the chain is on the extracellular side; the sequence is GQVIGFFQSLPEIINE. A helical membrane pass occupies residues 18 to 33; that stretch reads ALNIALICVALLATIK. The Cytoplasmic segment spans residues 34–58; it reads GMVNIWKSGLIQLLFFLTLAGRSCS. Zn(2+) is bound at residue Cys-57. Residues 59–453 are Extracellular-facing; that stretch reads HSFTIGRFHE…QGRTPLSLVD (395 aa). 4 cysteine pairs are disulfide-bonded: Cys-87–Cys-255, Cys-300–Cys-313, Cys-322–Cys-331, and Cys-385–Cys-406. N-linked (GlcNAc...) asparagine; by host glycans are attached at residues Asn-90, Asn-112, Asn-127, Asn-180, and Asn-248. N-linked (GlcNAc...) asparagine; by host glycans are attached at residues Asn-386, Asn-394, and Asn-416. Residues 454–474 traverse the membrane as a helical segment; it reads LCFWSTLFYISTLFAHLVGFP. Residues 475-515 are Cytoplasmic-facing; it reads THRHLIGEGCPKPHRLTGSGICSCGHYGIPGKPVRWTKMSR. Zn(2+) is bound by residues His-476, His-478, Cys-484, His-488, Cys-496, and Cys-498.

It belongs to the arenaviridae GPC protein family. As to quaternary structure, interacts with glycoprotein G2. Part of the GP complex (GP-C) together with glycoprotein G1 and glycoprotein G2. The GP-complex interacts with protein Z, which interacts with ribonucleocapsid; these interactions may induce virion budding. In terms of assembly, homotrimer; disulfide-linked. In pre-fusion state, G1 homotrimers bind G2 homotrimers via ionic interactions. Part of the GP complex (GP-C) together with glycoprotein G2 and the stable signal peptide. The GP-complex interacts with protein Z, which interacts with ribonucleocapsid; these interactions may induce virion budding. Homotrimer. Interacts with the stable signal peptide. In pre-fusion state, G2 homotrimers bind G1 homotrimers via ionic interactions. Part of the GP complex (GP-C) together with glycoprotein G1 and the stable signal peptide. Acidification in the endosome triggers rearrangements, which ultimately leads to a 6 helix bundle formed by the two heptad repeat domains (HR1 and HR2) in post-fusion state. The GP-complex interacts with protein Z, which interacts with ribonucleocapsid; these interactions may induce virion budding. Post-translationally, specific enzymatic cleavages in vivo yield mature proteins. GP-C polyprotein is cleaved in the endoplasmic reticulum by the host protease MBTPS1. Only cleaved glycoprotein is incorporated into virions. In terms of processing, the SSP remains stably associated with the GP complex following cleavage by signal peptidase and plays crucial roles in the trafficking of GP through the secretory pathway. Myristoylation is necessary for GP2-mediated fusion activity.

It is found in the virion membrane. The protein resides in the host endoplasmic reticulum membrane. It localises to the host Golgi apparatus membrane. The protein localises to the host cell membrane. Functionally, functions as a cleaved signal peptide that is retained as the third component of the GP complex (GP-C). Helps to stabilize the spike complex in its native conformation. The SSP is required for efficient glycoprotein expression, post-translational maturation cleavage of G1 and G2, glycoprotein transport to the cell surface plasma membrane, formation of infectious virus particles, and acid pH-dependent glycoprotein-mediated cell fusion. Its function is as follows. Forms the virion spikes together with glycoprotein G2. The glycoprotein spike trimers are connected to the underlying matrix. Mediates virus attachment to host receptor alpha-dystroglycan DAG1. This attachment induces virion internalization predominantly through clathrin- and caveolin-independent endocytosis. In terms of biological role, forms the virion spikes together with glycoprotein G1. The glycoprotein spike trimers are connected to the underlying matrix. Class I viral fusion protein that directs fusion of viral and host endosomal membranes, leading to delivery of the nucleocapsid into the cytoplasm. Membrane fusion is mediated by irreversible conformational changes induced by acidification. This is Pre-glycoprotein polyprotein GP complex from Latino mammarenavirus (isolate Rat/Bolivia/MARU 1924/1965) (LATV).